The chain runs to 540 residues: Zinc metalloproteinase nas-10 (540 aa).

The 208-residue stretch at 293-500 folds into the Peptidase M12A domain; the sequence is ASIFFEQNLI…VEILNKMYCK (208 aa). 5 cysteine pairs are disulfide-bonded: Cys339/Cys499, Cys365/Cys385, Cys504/Cys540, Cys511/Cys533, and Cys520/Cys537. His394 contributes to the Zn(2+) binding site. Glu395 is an active-site residue. His398 and His404 together coordinate Zn(2+). Residues 504–540 enclose the ShKT domain; it reads CDDKNVYCGAWALQDLCNNPNHNVWMRSNCRKSCNFC.

Zn(2+) serves as cofactor.

Metalloprotease. The chain is Zinc metalloproteinase nas-10 from Caenorhabditis elegans.